Consider the following 613-residue polypeptide: 9-cis-epoxycarotenoid dioxygenase NCED5, chloroplastic (613 aa).

The span at 1–15 (MPTTFTPNSPASSCS) shows a compositional bias: polar residues. The transit peptide at 1 to 36 (MPTTFTPNSPASSCSIHHRASPSRGARNSVRFTRPR) directs the protein to the chloroplast. The interval 1–62 (MPTTFTPNSP…PPAYVPPPPP (62 aa)) is disordered. Low complexity predominate over residues 37 to 50 (AAAAATNSVLSAPS). Pro residues predominate over residues 51–62 (SVPPAYVPPPPP). Fe cation contacts are provided by H305, H354, H419, and H600.

The protein belongs to the carotenoid oxygenase family. Requires Fe(2+) as cofactor.

The protein localises to the plastid. Its subcellular location is the chloroplast. It carries out the reaction a 9-cis-epoxycarotenoid + O2 = a 12'-apo-carotenal + 2-cis,4-trans-xanthoxin. The catalysed reaction is 9-cis-violaxanthin + O2 = (3S,5R,6S)-5,6-epoxy-3-hydroxy-5,6-dihydro-12'-apo-beta-caroten-12'-al + 2-cis,4-trans-xanthoxin. The enzyme catalyses 9'-cis-neoxanthin + O2 = (3S,5R,6R)-3,5-dihydroxy-6,7-didehydro-5,6-dihydro-12'-apo-beta-caroten-12'-al + 2-cis,4-trans-xanthoxin. Functionally, has a 11,12(11',12') 9-cis epoxycarotenoid cleavage activity. Catalyzes the first step of abscisic-acid biosynthesis from carotenoids. The polypeptide is 9-cis-epoxycarotenoid dioxygenase NCED5, chloroplastic (Oryza sativa subsp. japonica (Rice)).